The sequence spans 872 residues: Alanine--tRNA ligase (872 aa).

Zn(2+)-binding residues include His-567, His-571, Cys-669, and His-673.

The protein belongs to the class-II aminoacyl-tRNA synthetase family. Requires Zn(2+) as cofactor.

The protein localises to the cytoplasm. It carries out the reaction tRNA(Ala) + L-alanine + ATP = L-alanyl-tRNA(Ala) + AMP + diphosphate. Functionally, catalyzes the attachment of alanine to tRNA(Ala) in a two-step reaction: alanine is first activated by ATP to form Ala-AMP and then transferred to the acceptor end of tRNA(Ala). Also edits incorrectly charged Ser-tRNA(Ala) and Gly-tRNA(Ala) via its editing domain. The polypeptide is Alanine--tRNA ligase (Streptococcus pyogenes serotype M12 (strain MGAS2096)).